The primary structure comprises 454 residues: Phosphoglucosamine mutase (454 aa).

Catalysis depends on Ser101, which acts as the Phosphoserine intermediate. 4 residues coordinate Mg(2+): Ser101, Asp243, Asp245, and Asp247. The residue at position 101 (Ser101) is a Phosphoserine.

Belongs to the phosphohexose mutase family. It depends on Mg(2+) as a cofactor. Activated by phosphorylation.

It catalyses the reaction alpha-D-glucosamine 1-phosphate = D-glucosamine 6-phosphate. Its function is as follows. Catalyzes the conversion of glucosamine-6-phosphate to glucosamine-1-phosphate. This is Phosphoglucosamine mutase from Geobacter sp. (strain M21).